The following is a 329-amino-acid chain: L-threonine dehydratase catabolic TdcB (329 aa).

53 to 54 contacts AMP; sequence RT. Lys58 is subject to N6-(pyridoxal phosphate)lysine. AMP contacts are provided by residues Gln88, 119–120, and Asn314; that span reads DY.

It belongs to the serine/threonine dehydratase family. As to quaternary structure, in the native structure, TdcB is in a dimeric form, whereas in the TdcB-AMP complex, it exists in a tetrameric form (dimer of dimers). Pyridoxal 5'-phosphate is required as a cofactor.

The enzyme catalyses L-threonine = 2-oxobutanoate + NH4(+). The catalysed reaction is L-serine = pyruvate + NH4(+). Its pathway is amino-acid degradation; L-threonine degradation via propanoate pathway; propanoate from L-threonine: step 1/4. Each protein molecule can bind up to four molecules of AMP, which act as an allosteric activator to the enzyme. Its function is as follows. Catalyzes the anaerobic formation of alpha-ketobutyrate and ammonia from threonine in a two-step reaction. The first step involved a dehydration of threonine and a production of enamine intermediates (aminocrotonate), which tautomerizes to its imine form (iminobutyrate). Both intermediates are unstable and short-lived. The second step is the nonenzymatic hydrolysis of the enamine/imine intermediates to form 2-ketobutyrate and free ammonia. In the low water environment of the cell, the second step is accelerated by RidA. TdcB also dehydrates serine to yield pyruvate via analogous enamine/imine intermediates. This chain is L-threonine dehydratase catabolic TdcB (tdcB), found in Escherichia coli O157:H7.